The sequence spans 560 residues: Thermosome subunit alpha (560 aa).

Residues 535–547 (SEKKGGEGSKEES) are compositionally biased toward basic and acidic residues. Residues 535-560 (SEKKGGEGSKEESGGEGGAGTPSLGD) are disordered.

It belongs to the TCP-1 chaperonin family. Forms a heterooligomeric complex of two stacked nine-membered rings; one of alpha and the other of beta subunits. Sometimes called a 'rosettasome'.

The protein resides in the cytoplasm. It catalyses the reaction ATP + H2O = ADP + phosphate + H(+). In terms of biological role, molecular chaperone; binds unfolded polypeptides in vitro, stimulates protein folding and has ATPase activity. One of the most abundant proteins in the cell at all temperatures. The polypeptide is Thermosome subunit alpha (thsA) (Saccharolobus shibatae (strain ATCC 51178 / DSM 5389 / JCM 8931 / NBRC 15437 / B12) (Sulfolobus shibatae)).